The following is a 137-amino-acid chain: Nucleoside diphosphate kinase (137 aa).

Residues lysine 9, phenylalanine 57, arginine 85, threonine 91, arginine 102, and asparagine 112 each contribute to the ATP site. Histidine 115 serves as the catalytic Pros-phosphohistidine intermediate.

Belongs to the NDK family. As to quaternary structure, homotetramer. Requires Mg(2+) as cofactor.

It localises to the cytoplasm. It carries out the reaction a 2'-deoxyribonucleoside 5'-diphosphate + ATP = a 2'-deoxyribonucleoside 5'-triphosphate + ADP. It catalyses the reaction a ribonucleoside 5'-diphosphate + ATP = a ribonucleoside 5'-triphosphate + ADP. Its function is as follows. Major role in the synthesis of nucleoside triphosphates other than ATP. The ATP gamma phosphate is transferred to the NDP beta phosphate via a ping-pong mechanism, using a phosphorylated active-site intermediate. The protein is Nucleoside diphosphate kinase of Campylobacter jejuni subsp. jejuni serotype O:6 (strain 81116 / NCTC 11828).